A 475-amino-acid chain; its full sequence is Argininosuccinate lyase (475 aa).

Belongs to the lyase 1 family. Argininosuccinate lyase subfamily.

Its subcellular location is the cytoplasm. The catalysed reaction is 2-(N(omega)-L-arginino)succinate = fumarate + L-arginine. It functions in the pathway amino-acid biosynthesis; L-arginine biosynthesis; L-arginine from L-ornithine and carbamoyl phosphate: step 3/3. The polypeptide is Argininosuccinate lyase (Streptomyces coelicolor (strain ATCC BAA-471 / A3(2) / M145)).